Consider the following 81-residue polypeptide: Large ribosomal subunit protein bL31B (81 aa).

The protein belongs to the bacterial ribosomal protein bL31 family. Type B subfamily. Part of the 50S ribosomal subunit.

The protein is Large ribosomal subunit protein bL31B of Lactococcus lactis subsp. cremoris (strain MG1363).